The primary structure comprises 561 residues: Alpha-1D adrenergic receptor (561 aa).

Over 1–90 (MTFRDILSVT…VGGLVVSAQG (90 aa)) the chain is Extracellular. The segment at 10–71 (TFEGPRSSSS…SSTGEPGAAA (62 aa)) is disordered. Positions 21-56 (GGSGAGGGAGTVGPEGGAVGGVPGATGGGAVVGTGS) are enriched in gly residues. N-linked (GlcNAc...) asparagine glycosylation is found at N60 and N76. Residues 91-115 (VGVGVFLAAFILTAVAGNLLVILSV) traverse the membrane as a helical segment. Over 116-127 (ACNRHLQTVTNY) the chain is Cytoplasmic. Residues 128 to 153 (FIVNLAVADLLLSAAVLPFSATMEVL) form a helical membrane-spanning segment. The Extracellular segment spans residues 154-163 (GFWAFGRTFC). Residues 164–186 (DVWAAVDVLCCTASILSLCTISV) form a helical membrane-spanning segment. Residues 187–207 (DRYVGVRHSLKYPAIMTERKA) are Cytoplasmic-facing. A helical transmembrane segment spans residues 208–232 (AAILALLWAVALVVSVGPLLGWKEP). Topologically, residues 233–245 (VPPDERFCGITEE) are extracellular. The chain crosses the membrane as a helical span at residues 246–269 (VGYAIFSSVCSFYLPMAVIVVMYC). Residues 270 to 342 (RVYVVARSTT…KFSREKKAAK (73 aa)) lie on the Cytoplasmic side of the membrane. Residues 343–367 (TLAIVVGVFVLCWFPFFFVLPLGSL) form a helical membrane-spanning segment. The Extracellular portion of the chain corresponds to 368–374 (FPQLKPS). Residues 375–399 (EGVFKVIFWLGYFNSCVNPLIYPCS) traverse the membrane as a helical segment. Residues 400–561 (SREFKRAFLR…DYSNLRETDI (162 aa)) lie on the Cytoplasmic side of the membrane. C413 carries S-palmitoyl cysteine lipidation. A disordered region spans residues 452-481 (APLALTAHPGAGSADTPETQDSVSSSRKPA). The span at 467 to 479 (TPETQDSVSSSRK) shows a compositional bias: polar residues.

The protein belongs to the G-protein coupled receptor 1 family. Adrenergic receptor subfamily. ADRA1D sub-subfamily. As to quaternary structure, interacts with FLNA (via filamin repeat 21); increases PKA-mediated phosphorylation of FLNA. Post-translationally, palmitoylated. Palmitoylation by ZDHHC21 may increase the expression of the receptor and regulate downstream signaling. As to expression, vas deferens, hippocampus, cerebral cortex, aorta, brain stem, heart and spleen.

It localises to the cell membrane. In terms of biological role, this alpha-adrenergic receptor mediates its effect through the influx of extracellular calcium. This is Alpha-1D adrenergic receptor (Adra1d) from Rattus norvegicus (Rat).